We begin with the raw amino-acid sequence, 203 residues long: High frequency lysogenization protein HflD homolog (203 aa).

The protein belongs to the HflD family.

Its subcellular location is the cytoplasm. The protein localises to the cell inner membrane. The chain is High frequency lysogenization protein HflD homolog from Histophilus somni (strain 2336) (Haemophilus somnus).